A 318-amino-acid chain; its full sequence is Fibronectin type III domain-containing protein 11 (318 aa).

The region spanning 210–307 (VVFDRKASAA…DSLTLHTKPE (98 aa)) is the Fibronectin type-III domain.

The chain is Fibronectin type III domain-containing protein 11 (FNDC11) from Homo sapiens (Human).